The following is a 60-amino-acid chain: Large ribosomal subunit protein uL30 (60 aa).

Belongs to the universal ribosomal protein uL30 family. Part of the 50S ribosomal subunit.

The polypeptide is Large ribosomal subunit protein uL30 (Streptococcus thermophilus (strain CNRZ 1066)).